A 308-amino-acid polypeptide reads, in one-letter code: Protein translocase subunit SecF (308 aa).

The next 6 helical transmembrane spans lie at serine 28–isoleucine 48, isoleucine 140–valine 160, tryptophan 164–phenylalanine 184, leucine 194–isoleucine 214, isoleucine 246–alanine 266, and isoleucine 272–isoleucine 292.

It belongs to the SecD/SecF family. SecF subfamily. As to quaternary structure, forms a complex with SecD. Part of the essential Sec protein translocation apparatus which comprises SecA, SecYEG and auxiliary proteins SecDF-YajC and YidC.

The protein resides in the cell inner membrane. Its function is as follows. Part of the Sec protein translocase complex. Interacts with the SecYEG preprotein conducting channel. SecDF uses the proton motive force (PMF) to complete protein translocation after the ATP-dependent function of SecA. The protein is Protein translocase subunit SecF of Rickettsia rickettsii (strain Sheila Smith).